The chain runs to 357 residues: Red-sensitive opsin (357 aa).

The Extracellular portion of the chain corresponds to 1–49 (MAEQWGKQVFAARRQNEDTTRGSAFTYTNSNHTRDPFEGPNYHIAPRWV). Asparagine 31 carries N-linked (GlcNAc...) asparagine glycosylation. Residues 50–74 (YNLATLWMFFVVVLSVFTNGLVLVA) traverse the membrane as a helical segment. Residues 75-86 (TAKFKKLRHPLN) lie on the Cytoplasmic side of the membrane. Residues 87–112 (WILSNLAIADLGETVFASTISVCNQF) traverse the membrane as a helical segment. The Extracellular segment spans residues 113–126 (FGYFILGHPMCVFE). The cysteines at positions 123 and 200 are disulfide-linked. A helical membrane pass occupies residues 127 to 146 (GYVVSTCGIAALWSLTIISW). The Cytoplasmic segment spans residues 147–165 (ERWVVVCKPFGNVKFDAKW). Residues 166–189 (AIGGIVFSWVWSAVWCAPPVFGWS) traverse the membrane as a helical segment. The Extracellular segment spans residues 190–215 (RYWPHGLKTSCGPDVFSGSDDPGVQS). Residues 216–243 (YMIVLMITCCIIPLAIIILCYLAVWLAI) traverse the membrane as a helical segment. At 244–265 (RAVAMQQKESESTQKAEREVSR) the chain is on the cytoplasmic side. The helical transmembrane segment at 266–289 (MVVVMIVAYCVCWGPYTFFACFAA) threads the bilayer. The Extracellular segment spans residues 290–297 (ANPGYAFH). The helical transmembrane segment at 298–322 (PLAAAMPAYFAKSATIYNPVIYVFM) threads the bilayer. N6-(retinylidene)lysine is present on lysine 309. Residues 323-357 (NRQFRTCIMQLFGKQVDDGSEVSTSKTEVSSVAPA) lie on the Cytoplasmic side of the membrane.

Belongs to the G-protein coupled receptor 1 family. Opsin subfamily. In terms of processing, phosphorylated on some or all of the serine and threonine residues present in the C-terminal region. In terms of tissue distribution, the color pigments are found in the cone photoreceptor cells.

The protein localises to the membrane. Its function is as follows. Visual pigments are the light-absorbing molecules that mediate vision. They consist of an apoprotein, opsin, covalently linked to cis-retinal. This chain is Red-sensitive opsin, found in Oryzias latipes (Japanese rice fish).